The sequence spans 476 residues: Dermokine (476 aa).

The N-terminal stretch at 1 to 21 is a signal peptide; it reads MKFQGPLACLLLALCLGSGEA. 4 stretches are compositionally biased toward gly residues: residues 153 to 169, 193 to 202, 236 to 259, and 268 to 298; these read SQGGLGGQGQGNPGGLG, WGQGGNGGPP, GSGGGSSNSGGGSGSQSGSSGSGS, and SSGGSSSGSSSGGSSGGSSGGSSGNSGGSRG. A disordered region spans residues 153–351; sequence SQGGLGGQGQ…ESGIQNSETS (199 aa). Low complexity predominate over residues 299-315; the sequence is DSGSESSWGSSTGSSSG. A compositionally biased stretch (gly residues) spans 316–326; that stretch reads NHGGSGGGNGH.

It belongs to the dermokine family. In terms of assembly, homooligomer. Seems to be able to homodimerize and homotrimerize. O-glycosylated. Expressed in epidermis; in the spinous and granular layers and in placenta. Also found in the epithelia of the small intestine, macrophages of the lung and endothelial cells of the lung. Isoform 15 is expressed in epidermis and placenta. Isoform 1 is expressed in epidermis.

It is found in the secreted. In terms of biological role, may act as a soluble regulator of keratinocyte differentiation. This Homo sapiens (Human) protein is Dermokine (DMKN).